We begin with the raw amino-acid sequence, 321 residues long: Cytochrome f (321 aa).

The first 38 residues, 1-38 (MKKNFYTISKTMSRSLKLILFSVFIGFSIFLIPQPTWA), serve as a signal peptide directing secretion. Residues Y39, C59, C62, and H63 each contribute to the heme site. Residues 288 to 308 (VIGMIIFFIGVGLSQIMLVLK) form a helical membrane-spanning segment.

The protein belongs to the cytochrome f family. As to quaternary structure, the 4 large subunits of the cytochrome b6-f complex are cytochrome b6, subunit IV (17 kDa polypeptide, PetD), cytochrome f and the Rieske protein, while the 4 small subunits are PetG, PetL, PetM and PetN. The complex functions as a dimer. It depends on heme as a cofactor.

It localises to the cellular thylakoid membrane. Component of the cytochrome b6-f complex, which mediates electron transfer between photosystem II (PSII) and photosystem I (PSI), cyclic electron flow around PSI, and state transitions. The protein is Cytochrome f of Prochlorococcus marinus (strain NATL1A).